A 253-amino-acid chain; its full sequence is Triosephosphate isomerase (253 aa).

Residue 8–10 participates in substrate binding; the sequence is NWK. His-91 serves as the catalytic Electrophile. The active-site Proton acceptor is the Glu-168. Substrate-binding positions include Gly-174, Ser-213, and 234 to 235; that span reads GG.

It belongs to the triosephosphate isomerase family. Homodimer.

It localises to the cytoplasm. The enzyme catalyses D-glyceraldehyde 3-phosphate = dihydroxyacetone phosphate. The protein operates within carbohydrate biosynthesis; gluconeogenesis. Its pathway is carbohydrate degradation; glycolysis; D-glyceraldehyde 3-phosphate from glycerone phosphate: step 1/1. Involved in the gluconeogenesis. Catalyzes stereospecifically the conversion of dihydroxyacetone phosphate (DHAP) to D-glyceraldehyde-3-phosphate (G3P). The chain is Triosephosphate isomerase from Acidiphilium cryptum (strain JF-5).